The sequence spans 295 residues: Threonine/homoserine exporter RhtA (295 aa).

Over 1 to 9 (MPGSLRKMP) the chain is Cytoplasmic. A helical membrane pass occupies residues 10–30 (VWLPIVILLVAMASIQGGASL). In terms of domain architecture, EamA 1 spans 30-135 (LAKSLFPLVG…VLAVLGLWFL (106 aa)). The Periplasmic segment spans residues 31–38 (AKSLFPLV). A helical membrane pass occupies residues 39 to 59 (GAPGVTALRLALGTLILIAFF). Over 60 to 71 (KPWRLRFAKEQR) the chain is Cytoplasmic. The chain crosses the membrane as a helical span at residues 72–92 (LPLLFYGVSLGGMNYLFYLSI). Position 93 (Gln93) is a topological domain, periplasmic. A helical membrane pass occupies residues 94 to 114 (TVPLGIAVALEFTGPLAVALF). Over 115 to 118 (SSRR) the chain is Cytoplasmic. Residues 119–139 (PVDFVWVVLAVLGLWFLLPLG) traverse the membrane as a helical segment. Residues 140 to 146 (QDVSHVD) are Periplasmic-facing. Residues 147 to 167 (LTGCALALGAGACWAIYILSG) form a helical membrane-spanning segment. Residues 159-278 (CWAIYILSGQ…LGAIIAASMG (120 aa)) form the EamA 2 domain. Residues 168-175 (QRAGAEHG) are Cytoplasmic-facing. Residues 176–196 (PATVAIGSLIAALIFVPIGAL) traverse the membrane as a helical segment. Topologically, residues 197–200 (QAGE) are periplasmic. Residues 201–221 (ALWHWSVIPLGLAVAILSTAL) traverse the membrane as a helical segment. Residues 222 to 237 (PYSLEMIALTRLPTRT) are Cytoplasmic-facing. Residues 238-258 (FGTLMSMEPALAAVSGMIFLG) form a helical membrane-spanning segment. At 259–262 (ETLT) the chain is on the periplasmic side. A helical transmembrane segment spans residues 263–283 (PIQLLALGAIIAASMGSTLTV). Topologically, residues 284 to 295 (RKESKIKELDIN) are cytoplasmic.

The protein belongs to the drug/metabolite transporter (DMT) superfamily. 10 TMS drug/metabolite exporter (DME) (TC 2.A.7.3) family.

The protein localises to the cell inner membrane. Its function is as follows. Involved in the efflux of threonine and homoserine. This Escherichia coli O157:H7 protein is Threonine/homoserine exporter RhtA (rhtA).